A 437-amino-acid polypeptide reads, in one-letter code: Glutamyl-tRNA reductase (437 aa).

Substrate-binding positions include 49–52 (TCNR), S109, 114–116 (EGQ), and Q120. The Nucleophile role is filled by C50. Position 198 to 203 (198 to 203 (GAGRMS)) interacts with NADP(+).

This sequence belongs to the glutamyl-tRNA reductase family. In terms of assembly, homodimer.

It carries out the reaction (S)-4-amino-5-oxopentanoate + tRNA(Glu) + NADP(+) = L-glutamyl-tRNA(Glu) + NADPH + H(+). Its pathway is porphyrin-containing compound metabolism; protoporphyrin-IX biosynthesis; 5-aminolevulinate from L-glutamyl-tRNA(Glu): step 1/2. It functions in the pathway porphyrin-containing compound metabolism; chlorophyll biosynthesis. Functionally, catalyzes the NADPH-dependent reduction of glutamyl-tRNA(Glu) to glutamate 1-semialdehyde (GSA). This is Glutamyl-tRNA reductase from Prochlorococcus marinus (strain SARG / CCMP1375 / SS120).